The following is a 461-amino-acid chain: MRADWVAKRQGQSNVSQMHYARQGVITEEMDYVAKRENLPVDLIRDEVARGRMIIPANINHTNLEPMCIGIASKCKVNANIGASPNSSEINEELAKLQQAVKYGADTVMDLSTGGGNLDEIRTAIIKASPVPIGTVPIYQALESVHGNMENLTANDFLHIIEKHAQQGVDYMTIHAGILIEHLPLVKNRITGIVSRGGGILARWMLHHHKQNPLYTHFDDIIEIFKRYDVSFSLGDSLRPGCTHDASDEAQLAELKTLGQLTRRAWEHDVQVMVEGPGHVPMDQIEFNVKKQMEECSEAPFYVLGPLVTDIAPGYDHITSAIGAAMAGWYGTAMLCYVTPKEHLGLPDAEDVRNGLIAYKIAAHAADIARHRPGARDRDDELSHARYNFDWEKQFELSLDPERAREYHDETLPADIYKTAEFCSMCGPKFCPMQTKVDADALTELEKYLASTAAKEELAKA.

Substrate-binding positions include Asn-80, Met-109, Tyr-139, His-175, 195–197 (SRG), 236–239 (DSLR), and Glu-275. His-279 is a Zn(2+) binding site. Tyr-302 serves as a coordination point for substrate. Residue His-343 coordinates Zn(2+). 3 residues coordinate [4Fe-4S] cluster: Cys-423, Cys-426, and Cys-431.

This sequence belongs to the ThiC family. [4Fe-4S] cluster serves as cofactor.

The catalysed reaction is 5-amino-1-(5-phospho-beta-D-ribosyl)imidazole + S-adenosyl-L-methionine = 4-amino-2-methyl-5-(phosphooxymethyl)pyrimidine + CO + 5'-deoxyadenosine + formate + L-methionine + 3 H(+). Its pathway is cofactor biosynthesis; thiamine diphosphate biosynthesis. Functionally, catalyzes the synthesis of the hydroxymethylpyrimidine phosphate (HMP-P) moiety of thiamine from aminoimidazole ribotide (AIR) in a radical S-adenosyl-L-methionine (SAM)-dependent reaction. The polypeptide is Phosphomethylpyrimidine synthase (Picosynechococcus sp. (strain ATCC 27264 / PCC 7002 / PR-6) (Agmenellum quadruplicatum)).